The primary structure comprises 148 residues: Ribosomal RNA large subunit methyltransferase H 2 (148 aa).

S-adenosyl-L-methionine-binding positions include Leu-74, Gly-106, and 125-130 (FSKMTF).

This sequence belongs to the RNA methyltransferase RlmH family. In terms of assembly, homodimer.

The protein localises to the cytoplasm. The enzyme catalyses pseudouridine(1915) in 23S rRNA + S-adenosyl-L-methionine = N(3)-methylpseudouridine(1915) in 23S rRNA + S-adenosyl-L-homocysteine + H(+). Specifically methylates the pseudouridine at position 1915 (m3Psi1915) in 23S rRNA. This is Ribosomal RNA large subunit methyltransferase H 2 from Caldanaerobacter subterraneus subsp. tengcongensis (strain DSM 15242 / JCM 11007 / NBRC 100824 / MB4) (Thermoanaerobacter tengcongensis).